The chain runs to 591 residues: Aspartate--tRNA(Asp/Asn) ligase (591 aa).

Residue glutamate 176 participates in L-aspartate binding. Positions glutamine 200–lysine 203 are aspartate. An L-aspartate-binding site is contributed by arginine 222. Residues arginine 222 to glutamate 224 and glutamine 231 each bind ATP. Histidine 450 is a binding site for L-aspartate. Glutamate 484 provides a ligand contact to ATP. Arginine 491 is a binding site for L-aspartate. Glycine 536–arginine 539 contacts ATP.

This sequence belongs to the class-II aminoacyl-tRNA synthetase family. Type 1 subfamily. In terms of assembly, homodimer.

It localises to the cytoplasm. It catalyses the reaction tRNA(Asx) + L-aspartate + ATP = L-aspartyl-tRNA(Asx) + AMP + diphosphate. Its function is as follows. Aspartyl-tRNA synthetase with relaxed tRNA specificity since it is able to aspartylate not only its cognate tRNA(Asp) but also tRNA(Asn). Reaction proceeds in two steps: L-aspartate is first activated by ATP to form Asp-AMP and then transferred to the acceptor end of tRNA(Asp/Asn). The sequence is that of Aspartate--tRNA(Asp/Asn) ligase from Bacillus cereus (strain ATCC 10987 / NRS 248).